Reading from the N-terminus, the 73-residue chain is Putative antimicrobial peptide clone 5 (73 aa).

The N-terminal stretch at 1 to 22 (MQIKHLITLFFLVLIGADQCSA) is a signal peptide. Positions 45-73 (EVSPQIDQYRNFQKREAELEELLDRLPMY) are excised as a propeptide.

It belongs to the non-disulfide-bridged peptide (NDBP) superfamily. Short antimicrobial peptide (group 4) family. In terms of tissue distribution, expressed by the venom gland.

Its subcellular location is the secreted. Its function is as follows. Antibacterial peptide. The sequence is that of Putative antimicrobial peptide clone 5 from Tityus costatus (Brazilian scorpion).